We begin with the raw amino-acid sequence, 396 residues long: Lipid-A-disaccharide synthase (396 aa).

It belongs to the LpxB family.

It catalyses the reaction a lipid X + a UDP-2-N,3-O-bis[(3R)-3-hydroxyacyl]-alpha-D-glucosamine = a lipid A disaccharide + UDP + H(+). It participates in bacterial outer membrane biogenesis; LPS lipid A biosynthesis. Its function is as follows. Condensation of UDP-2,3-diacylglucosamine and 2,3-diacylglucosamine-1-phosphate to form lipid A disaccharide, a precursor of lipid A, a phosphorylated glycolipid that anchors the lipopolysaccharide to the outer membrane of the cell. The chain is Lipid-A-disaccharide synthase from Hahella chejuensis (strain KCTC 2396).